A 192-amino-acid chain; its full sequence is E3 ubiquitin-protein ligase RNF185 (192 aa).

Over residues 1–13 (MASKGPSASASTE) the composition is skewed to polar residues. Residues 1–30 (MASKGPSASASTENSNAGGPSGSSNGTGES) form a disordered region. Residues 1-130 (MASKGPSASA…GGFQGFGFGD (130 aa)) lie on the Cytoplasmic side of the membrane. The segment covering 14–27 (NSNAGGPSGSSNGT) has biased composition (low complexity). Residues 29–80 (ESGGQDSTFECNICLDTAKDAVISLCGHLFCWPCLHQWLETRPNRQVCPVCK) are required for ubiquitin ligase activity and protection against ER stress-induced cell death. Residues 39–80 (CNICLDTAKDAVISLCGHLFCWPCLHQWLETRPNRQVCPVCK) form an RING-type zinc finger. The segment at 90–123 (PLYGRGSTGQQDPREKTPPRPQGQRPEPENRGGF) is disordered. Residues 131–151 (GGFQMSFGIGAFPFGIFATAF) form a helical membrane-spanning segment. Residues 152 to 171 (NINDGRPPPAVPGTPQYVDE) lie on the Mitochondrial intermembrane side of the membrane. A helical transmembrane segment spans residues 172-192 (QFLSRLFLFVALVIMFWLLIA).

Interacts with ATG5 and BNIP1. Ubiquitously expressed with high expression in testis.

The protein localises to the mitochondrion outer membrane. Its subcellular location is the endoplasmic reticulum membrane. The enzyme catalyses S-ubiquitinyl-[E2 ubiquitin-conjugating enzyme]-L-cysteine + [acceptor protein]-L-lysine = [E2 ubiquitin-conjugating enzyme]-L-cysteine + N(6)-ubiquitinyl-[acceptor protein]-L-lysine.. It participates in protein modification; protein ubiquitination. Functionally, E3 ubiquitin-protein ligase that regulates selective mitochondrial autophagy by mediating 'Lys-63'-linked polyubiquitination of BNIP1. Acts in the endoplasmic reticulum (ER)-associated degradation (ERAD) pathway, which targets misfolded proteins that accumulate in the endoplasmic reticulum (ER) for ubiquitination and subsequent proteasome-mediated degradation. Protects cells from ER stress-induced apoptosis. Responsible for the cotranslational ubiquitination and degradation of CFTR in the ERAD pathway. Also acts as a regulator of the innate antiviral response by catalyzing 'Lys-27'-linked polyubiquitination of CGAS, thereby promoting CGAS cyclic GMP-AMP synthase activity. Preferentially associates with the E2 enzymes UBE2J1 and UBE2J2. The chain is E3 ubiquitin-protein ligase RNF185 (Rnf185) from Mus musculus (Mouse).